Here is a 602-residue protein sequence, read N- to C-terminus: Major facilitator superfamily multidrug transporter mfsB (602 aa).

Transmembrane regions (helical) follow at residues 29 to 49, 67 to 87, 98 to 118, 128 to 148, 160 to 180, 201 to 221, 329 to 349, 378 to 398, 411 to 431, 439 to 459, 468 to 486, and 505 to 525; these read FVLA…FPYV, LYAG…GMFW, PVLI…GFAP, ALGG…AEIV, IMPF…GALA, FLLP…VGFL, IVAY…IPVF, FMLA…FPFV, VLLV…LPSI, LALI…AILL, VLGS…SRAL, and IIAW…SFWM. A disordered region spans residues 527-602; the sequence is ESEPRRDSEK…RSNPLAFAED (76 aa). Residues 528-538 are compositionally biased toward basic and acidic residues; it reads SEPRRDSEKAG.

The protein belongs to the major facilitator superfamily.

It is found in the membrane. Functionally, major facilitator superfamily transporter that may be involved in A.fumigatus adaptation to azoles such as vorizonazole. The protein is Major facilitator superfamily multidrug transporter mfsB of Aspergillus fumigatus (strain ATCC MYA-4609 / CBS 101355 / FGSC A1100 / Af293) (Neosartorya fumigata).